Reading from the N-terminus, the 592-residue chain is MKRSEESTSTQSPEEQTGTLHCWRCRKCIASSGCFMTPLETQVVEQDRHESVDAQNTCHLWHMNVDALPEWISCLLQKAQWTVGKLNCPFCGARLGGFNFVSTPKCSCGQLAAVHLCKSRTDHQAAQGGRLMRPALKHLPHPGVPSGCDKETLLTGGGSKTRNHWLLSMARNSNGLGRLTEALCLEVRATYFEMKNEKLLFKASDPKCQPFVPQPDTGRCPSRASHRKSHSLDLNISEKLILLPTLYEIHRKPTAYPRLNETGPIDLSGLALPCSNSSCSFQSPPSFDPNMLLHRLSVAPHETQAQRGRECQCGLEASSVYSDHANANSLPFLMDLPSAGRSVLEASDQEEHLSQLDFLRSASFPLGTINHRLNNRERSKLRTLRRQQRRERWLQKQGKYSGVGLLDHMTVSNEMSTDEETEFPEEKDSYMCAVCLDVYFNPYMCYPCHHIFCEPCLRTLAKDNPASTPCPLCRTIISRVFLQTELNNATKTFFTKEYLKIKQSFQKSSSAKWPLPSCRKGFHLFGGFHRRAAPVTRRQFPHGAHRMDYLHFEDDSRGWWFDMDMVIIYIYSVNWVIGFVVFCFLCYFFFPF.

Over 1–564 (MKRSEESTST…DSRGWWFDMD (564 aa)) the chain is Cytoplasmic. Position 231 is a phosphoserine (Ser231). Residues 282–489 (QSPPSFDPNM…VFLQTELNNA (208 aa)) are interaction with ZIC2. The segment at 432-474 (CAVCLDVYFNPYMCYPCHHIFCEPCLRTLAKDNPASTPCPLCR) adopts an RING-type zinc-finger fold. A helical membrane pass occupies residues 565-585 (MVIIYIYSVNWVIGFVVFCFL). The Extracellular segment spans residues 586-592 (CYFFFPF).

As to quaternary structure, interacts with ZIC2. In terms of tissue distribution, brain, kidney, testis and uterus. membrane protein. Nucleus envelope.

The protein resides in the endoplasmic reticulum membrane. Its subcellular location is the nucleus envelope. The catalysed reaction is S-ubiquitinyl-[E2 ubiquitin-conjugating enzyme]-L-cysteine + [acceptor protein]-L-lysine = [E2 ubiquitin-conjugating enzyme]-L-cysteine + N(6)-ubiquitinyl-[acceptor protein]-L-lysine.. It functions in the pathway protein modification; protein ubiquitination. E3 ubiquitin-protein ligase which promotes polyubiquitination and degradation by the proteasome pathway of ZIC2. The sequence is that of E3 ubiquitin-protein ligase RNF180 (Rnf180) from Mus musculus (Mouse).